The sequence spans 63 residues: Sarcotoxin-1B (63 aa).

A signal peptide spans 1 to 23 (MNFNKVFIFVALILAVFAGQSQA). The residue at position 62 (arginine 62) is an Arginine amide.

It belongs to the cecropin family.

The protein resides in the secreted. In terms of biological role, sarcotoxins, which are potent bactericidal proteins, are produced in response to injury. They are cytotoxic to both Gram-positive and Gram-negative bacteria. The sequence is that of Sarcotoxin-1B from Sarcophaga peregrina (Flesh fly).